The primary structure comprises 235 residues: Purine nucleoside phosphorylase DeoD-type (235 aa).

An a purine D-ribonucleoside-binding site is contributed by histidine 4. Phosphate is bound by residues glycine 20, arginine 24, arginine 43, and 87–90 (RVGT). A purine D-ribonucleoside-binding positions include glutamate 162, 179–181 (EME), and 203–204 (SD). Aspartate 204 serves as the catalytic Proton donor.

The protein belongs to the PNP/UDP phosphorylase family. Homohexamer; trimer of homodimers.

The enzyme catalyses a purine D-ribonucleoside + phosphate = a purine nucleobase + alpha-D-ribose 1-phosphate. It carries out the reaction a purine 2'-deoxy-D-ribonucleoside + phosphate = a purine nucleobase + 2-deoxy-alpha-D-ribose 1-phosphate. Catalyzes the reversible phosphorolytic breakdown of the N-glycosidic bond in the beta-(deoxy)ribonucleoside molecules, with the formation of the corresponding free purine bases and pentose-1-phosphate. This chain is Purine nucleoside phosphorylase DeoD-type, found in Bacillus cereus (strain B4264).